The sequence spans 183 residues: Small ribosomal subunit protein uS4 (183 aa).

The 63-residue stretch at 106–168 (RRLQTQVYRQ…AGSPLAREGH (63 aa)) folds into the S4 RNA-binding domain.

Belongs to the universal ribosomal protein uS4 family. In terms of assembly, part of the 30S ribosomal subunit. Contacts protein S5. The interaction surface between S4 and S5 is involved in control of translational fidelity.

Functionally, one of the primary rRNA binding proteins, it binds directly to 16S rRNA where it nucleates assembly of the body of the 30S subunit. In terms of biological role, with S5 and S12 plays an important role in translational accuracy. This is Small ribosomal subunit protein uS4 from Methanothrix thermoacetophila (strain DSM 6194 / JCM 14653 / NBRC 101360 / PT) (Methanosaeta thermophila).